The following is a 1027-amino-acid chain: Exportin-T (1027 aa).

Belongs to the exportin family.

It is found in the nucleus. Its subcellular location is the cytoplasm. In terms of biological role, tRNA nucleus export receptor which facilitates tRNA translocation across the nuclear pore complex. Involved in pre-tRNA splicing, probably by affecting the interaction of pre-tRNA with splicing endonuclease. This is Exportin-T (LOS1) from Pyricularia oryzae (strain 70-15 / ATCC MYA-4617 / FGSC 8958) (Rice blast fungus).